Reading from the N-terminus, the 71-residue chain is DNA-directed RNA polymerase subunit omega (71 aa).

It belongs to the RNA polymerase subunit omega family. In terms of assembly, the RNAP catalytic core consists of 2 alpha, 1 beta, 1 beta' and 1 omega subunit. When a sigma factor is associated with the core the holoenzyme is formed, which can initiate transcription.

The catalysed reaction is RNA(n) + a ribonucleoside 5'-triphosphate = RNA(n+1) + diphosphate. Its function is as follows. Promotes RNA polymerase assembly. Latches the N- and C-terminal regions of the beta' subunit thereby facilitating its interaction with the beta and alpha subunits. The polypeptide is DNA-directed RNA polymerase subunit omega (Azoarcus sp. (strain BH72)).